We begin with the raw amino-acid sequence, 132 residues long: Methenyltetrahydromethanopterin cyclohydrolase (132 aa).

It belongs to the MCH family.

Its subcellular location is the cytoplasm. The enzyme catalyses 5,10-methenyl-5,6,7,8-tetrahydromethanopterin + H2O = N(5)-formyl-5,6,7,8-tetrahydromethanopterin + H(+). The protein operates within one-carbon metabolism; formaldehyde degradation; formate from formaldehyde (H(4)MPT route): step 3/5. Functionally, catalyzes the hydrolysis of methenyl-H(4)MPT(+) to 5-formyl-H(4)MPT. In Methylomonas rubra, this protein is Methenyltetrahydromethanopterin cyclohydrolase (mch).